The primary structure comprises 152 residues: S-ribosylhomocysteine lyase (152 aa).

His53, His57, and Cys120 together coordinate Fe cation.

Belongs to the LuxS family. Homodimer. It depends on Fe cation as a cofactor.

The enzyme catalyses S-(5-deoxy-D-ribos-5-yl)-L-homocysteine = (S)-4,5-dihydroxypentane-2,3-dione + L-homocysteine. Involved in the synthesis of autoinducer 2 (AI-2) which is secreted by bacteria and is used to communicate both the cell density and the metabolic potential of the environment. The regulation of gene expression in response to changes in cell density is called quorum sensing. Catalyzes the transformation of S-ribosylhomocysteine (RHC) to homocysteine (HC) and 4,5-dihydroxy-2,3-pentadione (DPD). This is S-ribosylhomocysteine lyase from Enterococcus faecalis (strain ATCC 700802 / V583).